The chain runs to 290 residues: MVIQKEKKSCGQVVEEWKEFVWNPRTHQFMGRTGTSWAFILLFYLVFYGFLTAMFTLTMWVMLQTVSDHTPKYQDRLATPGLMIRPKTENLDVIVNVSDTESWDQHVQKLNKFLEPYNDSIQAQKNDVCRPGRYYEQPDNGVLNYPKRACQFNRTQLGNCSGIGDPTHYGYSTGQPCVFIKMNRVINFYAGANQSMNVTCAGKRDEDAENLGNFVMFPANGNIDLMYFPYYGKKFHVNYTQPLVAVKFLNVTPNVEVNVECRINAANIATDDERDKFAGRVAFKLRINKT.

The Cytoplasmic portion of the chain corresponds to 1 to 39 (MVIQKEKKSCGQVVEEWKEFVWNPRTHQFMGRTGTSWAF). A helical; Signal-anchor for type II membrane protein membrane pass occupies residues 40 to 67 (ILLFYLVFYGFLTAMFTLTMWVMLQTVS). Residues 68 to 290 (DHTPKYQDRL…VAFKLRINKT (223 aa)) are Extracellular-facing. Asn-96 and Asn-118 each carry an N-linked (GlcNAc...) asparagine glycan. An intrachain disulfide couples Cys-129 to Cys-150. 2 N-linked (GlcNAc...) asparagine glycosylation sites follow: Asn-153 and Asn-159. A disulfide bridge connects residues Cys-160 and Cys-177. N-linked (GlcNAc...) asparagine glycans are attached at residues Asn-193, Asn-197, and Asn-238. The interval 193–290 (NQSMNVTCAG…VAFKLRINKT (98 aa)) is immunoglobulin-like. The cysteines at positions 200 and 261 are disulfide-linked.

It belongs to the X(+)/potassium ATPases subunit beta family. The sodium/potassium-transporting ATPase is composed of a catalytic alpha subunit, an auxiliary non-catalytic beta subunit and an additional regulatory subunit. Interacts with BSG.

It is found in the cell membrane. This is the non-catalytic component of the active enzyme, which catalyzes the hydrolysis of ATP coupled with the exchange of Na(+) and K(+) ions across the plasma membrane. The exact function of the beta-2 subunit is not known. Its function is as follows. Mediates cell adhesion of neurons and astrocytes, and promotes neurite outgrowth. This Ochotona curzoniae (Black-lipped pika) protein is Sodium/potassium-transporting ATPase subunit beta-2 (ATP1B2).